The following is a 383-amino-acid chain: Na(+)/H(+) antiporter NhaA (383 aa).

The next 11 membrane-spanning stretches (helical) occupy residues 10 to 30, 56 to 76, 91 to 111, 121 to 141, 150 to 170, 174 to 194, 206 to 226, 254 to 274, 289 to 308, 327 to 347, and 355 to 375; these read LIGGLILFSAALLAIVVNNSP, LMHWINDGLMAIYFLYIGLEI, IITPAIAAFAGLAMPSLIYLS, GWAIPSATDIAFTLAILALLG, LLVITIAIFDDIAAIAIIAIF, SLSLLSLSLGTLFILAMIICN, VVLGFFAWFCTIKSGVHATLA, PWIIYFILPVFAFANAGISFS, IIWGLFVGKQLGIFSILAVF, GISLLCGIGFTMSLFIGVLAF, and AIKIGVVVGSVLSGFFGYIVL.

It belongs to the NhaA Na(+)/H(+) (TC 2.A.33) antiporter family.

It localises to the cell inner membrane. It catalyses the reaction Na(+)(in) + 2 H(+)(out) = Na(+)(out) + 2 H(+)(in). Its function is as follows. Na(+)/H(+) antiporter that extrudes sodium in exchange for external protons. This Francisella tularensis subsp. tularensis (strain WY96-3418) protein is Na(+)/H(+) antiporter NhaA.